A 416-amino-acid polypeptide reads, in one-letter code: Tyrosine permease (416 aa).

11 helical membrane-spanning segments follow: residues 13 to 33, 34 to 54, 86 to 106, 127 to 147, 153 to 173, 192 to 212, 231 to 251, 260 to 280, 286 to 306, 337 to 357, and 389 to 409; these read GTML…PIAM, AGIW…MMLL, VVVG…YISG, LSVI…SLLV, VLII…IWHV, LPYI…HGNV, IFIG…VTMG, PIIA…GLFT, LILT…ATLG, VVCF…GLAF, and ILNL…LDVF.

This sequence belongs to the amino acid/polyamine transporter 2 family. Mtr/TnaB/TyrP permease subfamily.

Its subcellular location is the cell inner membrane. The sequence is that of Tyrosine permease (tutB) from Enterobacter agglomerans (Erwinia herbicola).